Consider the following 233-residue polypeptide: Large ribosomal subunit protein uL1 (233 aa).

This sequence belongs to the universal ribosomal protein uL1 family. In terms of assembly, part of the 50S ribosomal subunit.

Its function is as follows. Binds directly to 23S rRNA. The L1 stalk is quite mobile in the ribosome, and is involved in E site tRNA release. In terms of biological role, protein L1 is also a translational repressor protein, it controls the translation of the L11 operon by binding to its mRNA. The chain is Large ribosomal subunit protein uL1 from Proteus vulgaris.